The chain runs to 319 residues: Malate dehydrogenase (319 aa).

NAD(+) contacts are provided by residues 10–15 (GSGNIG) and Asp-34. 2 residues coordinate substrate: Arg-83 and Arg-89. NAD(+)-binding positions include Asn-96 and 119–121 (ITN). 2 residues coordinate substrate: Asn-121 and Arg-152. The active-site Proton acceptor is His-176.

It belongs to the LDH/MDH superfamily. MDH type 3 family.

It carries out the reaction (S)-malate + NAD(+) = oxaloacetate + NADH + H(+). Functionally, catalyzes the reversible oxidation of malate to oxaloacetate. The sequence is that of Malate dehydrogenase from Paramagnetospirillum magneticum (strain ATCC 700264 / AMB-1) (Magnetospirillum magneticum).